The chain runs to 222 residues: Probable nicotinate-nucleotide adenylyltransferase (222 aa).

This sequence belongs to the NadD family.

The catalysed reaction is nicotinate beta-D-ribonucleotide + ATP + H(+) = deamido-NAD(+) + diphosphate. Its pathway is cofactor biosynthesis; NAD(+) biosynthesis; deamido-NAD(+) from nicotinate D-ribonucleotide: step 1/1. Its function is as follows. Catalyzes the reversible adenylation of nicotinate mononucleotide (NaMN) to nicotinic acid adenine dinucleotide (NaAD). The chain is Probable nicotinate-nucleotide adenylyltransferase from Xylella fastidiosa (strain M12).